A 102-amino-acid polypeptide reads, in one-letter code: NADH-quinone oxidoreductase subunit K (102 aa).

A run of 3 helical transmembrane segments spans residues 5-25 (LSHYLTVSAILFTLGVFGIFL), 31-51 (IVILMSIELILLAVNINMVAF), and 65-85 (LFILTVAAAEAAIGLAILVVF).

It belongs to the complex I subunit 4L family. In terms of assembly, NDH-1 is composed of 14 different subunits. Subunits NuoA, H, J, K, L, M, N constitute the membrane sector of the complex.

It localises to the cell inner membrane. The catalysed reaction is a quinone + NADH + 5 H(+)(in) = a quinol + NAD(+) + 4 H(+)(out). Functionally, NDH-1 shuttles electrons from NADH, via FMN and iron-sulfur (Fe-S) centers, to quinones in the respiratory chain. The immediate electron acceptor for the enzyme in this species is believed to be ubiquinone. Couples the redox reaction to proton translocation (for every two electrons transferred, four hydrogen ions are translocated across the cytoplasmic membrane), and thus conserves the redox energy in a proton gradient. This is NADH-quinone oxidoreductase subunit K from Rhizobium johnstonii (strain DSM 114642 / LMG 32736 / 3841) (Rhizobium leguminosarum bv. viciae).